An 86-amino-acid polypeptide reads, in one-letter code: Beta-mammal/insect toxin To1 (86 aa).

Residues Met-1–Cys-20 form the signal peptide. In terms of domain architecture, LCN-type CS-alpha/beta spans Lys-22–Lys-84. Cystine bridges form between Cys-32–Cys-83, Cys-36–Cys-58, Cys-44–Cys-64, and Cys-48–Cys-66. Lys-84 carries the lysine amide modification.

The protein belongs to the long (4 C-C) scorpion toxin superfamily. Sodium channel inhibitor family. Beta subfamily. As to expression, expressed by the venom gland.

It localises to the secreted. Beta toxin that show multiple effects. It enhances the open probability at more negative potentials of human Nav1.3/SCN3A and Nav1.6/SCN8A, of the insect channel BgNaV1 and of arachnid VdNaV1 channel. It promotes an important shift in slow inactivation processes as a function of the prepulse voltage in human Nav1.3/SCN3A and Nav1.6/SCN8A and a small shift in Nav1.1/SCN1A, Nav1.2/SCN2A and Nav1.4/SCN4A. Finally, it reduces the peak of sodium currents in Nav1.3/SCN3A (80% inhibition at 70 nM of toxin), Nav1.6/SCN8A (55.3%), Nav1.1/SCN1A (53.3%), Nav1.5/SCN5A (46.7%), Nav1.2/SCN2A (42.7%) and Nav1.4/SCN4A (20%) voltage-gated sodium channels. It has also been shown to affect the sodium current permeability of rat cerebellum granular cells in a partially reversible manner. In vivo, an intraperitoneal injection (20 ug) into mice produces excitability, respiratory problems, convulsions and death, within the first 30 minutes after injection. The chain is Beta-mammal/insect toxin To1 from Tityus obscurus (Amazonian scorpion).